Reading from the N-terminus, the 321-residue chain is D-alanine--D-alanine ligase (321 aa).

The ATP-grasp domain occupies 103–303; the sequence is KKILTPENIP…YVALCRMIVE (201 aa). 129–186 is a binding site for ATP; sequence PLPRPYVLKPVNEGSSVGVAIIDESFNDGQPIRKDQIDPWKNFKTLLAEPFIKGRELT. Residues Asp-254, Glu-270, and Asn-272 each contribute to the Mg(2+) site.

Belongs to the D-alanine--D-alanine ligase family. Mg(2+) serves as cofactor. The cofactor is Mn(2+).

It localises to the cytoplasm. The enzyme catalyses 2 D-alanine + ATP = D-alanyl-D-alanine + ADP + phosphate + H(+). It functions in the pathway cell wall biogenesis; peptidoglycan biosynthesis. In terms of biological role, cell wall formation. The sequence is that of D-alanine--D-alanine ligase from Zymomonas mobilis subsp. mobilis (strain ATCC 31821 / ZM4 / CP4).